The sequence spans 194 residues: Leucyl/phenylalanyl-tRNA--protein transferase (194 aa).

It belongs to the L/F-transferase family.

It localises to the cytoplasm. It catalyses the reaction N-terminal L-lysyl-[protein] + L-leucyl-tRNA(Leu) = N-terminal L-leucyl-L-lysyl-[protein] + tRNA(Leu) + H(+). The catalysed reaction is N-terminal L-arginyl-[protein] + L-leucyl-tRNA(Leu) = N-terminal L-leucyl-L-arginyl-[protein] + tRNA(Leu) + H(+). It carries out the reaction L-phenylalanyl-tRNA(Phe) + an N-terminal L-alpha-aminoacyl-[protein] = an N-terminal L-phenylalanyl-L-alpha-aminoacyl-[protein] + tRNA(Phe). Functions in the N-end rule pathway of protein degradation where it conjugates Leu, Phe and, less efficiently, Met from aminoacyl-tRNAs to the N-termini of proteins containing an N-terminal arginine or lysine. The protein is Leucyl/phenylalanyl-tRNA--protein transferase of Pelodictyon phaeoclathratiforme (strain DSM 5477 / BU-1).